The chain runs to 403 residues: Odorant receptor 43b (403 aa).

The Cytoplasmic segment spans residues 1 to 49; sequence MFGHFKLVYPAPISEPIQSRDSNAYMMETLRNSGLNLKNDFGIGRKIWR. A helical transmembrane segment spans residues 50–70; sequence VFSFTYNMVILPVSFPINYVI. Over 71–83 the chain is Extracellular; sequence HLAEFPPELLLQS. Residues 84-104 traverse the membrane as a helical segment; the sequence is LQLCLNTWCFALKFFTLIVYT. The Cytoplasmic portion of the chain corresponds to 105–139; the sequence is HRLELANKHFDELDKYCVKPAEKRKVRDMVATITR. A helical transmembrane segment spans residues 140 to 160; sequence LYLTFVVVYVLYATSTLLDGL. At 161-193 the chain is on the extracellular side; it reads LHHRVPYNTYYPFINWRVDRTQMYIQSFLEYFT. A helical membrane pass occupies residues 194-214; that stretch reads VGYAIYVATATDSYPVIYVAA. Residues 215 to 271 are Cytoplasmic-facing; that stretch reads LRTHILLLKDRIIYLGDPSNEGSSDPSYMFKSLVDCIKAHRTMLNFCDAIQPIISGT. Residues 272–292 traverse the membrane as a helical segment; the sequence is IFAQFIICGSILGIIMINMVL. Over 293–299 the chain is Extracellular; it reads FADQSTR. A helical transmembrane segment spans residues 300-320; that stretch reads FGIVIYVMAVLLQTFPLCFYC. The Cytoplasmic segment spans residues 321 to 372; that stretch reads NAIVDDCKELAHALFHSAWWVQDKRYQRTVIQFLQKLQQPMTFTAMNIFNIN. Residues 373–393 traverse the membrane as a helical segment; that stretch reads LATNINVAKFAFTVYAIASGM. Topologically, residues 394–403 are extracellular; that stretch reads NLDQKLSIKE.

The protein belongs to the insect chemoreceptor superfamily. Heteromeric odorant receptor channel (TC 1.A.69) family. Or2a subfamily. Interacts with Orco. Complexes exist early in the endomembrane system in olfactory sensory neurons (OSNs), coupling these complexes to the conserved ciliary trafficking pathway. In terms of tissue distribution, expressed in 16 olfactory receptor neurons in a broad area across the antenna, including both anterior and posterior faces and in the maxillary palp. This expression pattern matches the distribution of the small sensilla basiconica. Expression in the antenna is observed late in antennal development at 93 hours APF.

The protein resides in the cell membrane. Odorant receptor which mediates acceptance or avoidance behavior, depending on its substrates. The odorant receptor repertoire encodes a large collection of odor stimuli that vary widely in identity, intensity, and duration. May form a complex with Orco to form odorant-sensing units, providing sensitive and prolonged odorant signaling and calcium permeability. The polypeptide is Odorant receptor 43b (Or43b) (Drosophila melanogaster (Fruit fly)).